Reading from the N-terminus, the 232-residue chain is uncharacterized protein (232 aa).

This is an uncharacterized protein from Acanthamoeba polyphaga (Amoeba).